A 373-amino-acid polypeptide reads, in one-letter code: uncharacterized protein (373 aa).

This is an uncharacterized protein from Saccharomyces cerevisiae (strain ATCC 204508 / S288c) (Baker's yeast).